We begin with the raw amino-acid sequence, 741 residues long: Catalase-peroxidase 2 (741 aa).

An N-terminal signal peptide occupies residues 1–28 (MQKKRIGKSVVAALAIIAMSAGTVAAWA). Residues 107–228 (WHGAGTYRTY…LAATQMGLIY (122 aa)) constitute a cross-link (tryptophyl-tyrosyl-methioninium (Trp-Tyr) (with M-254)). Residue histidine 108 is the Proton acceptor of the active site. Residues 228–254 (YVNPEGPNGNPDPVAAAKDIREAFGRM) constitute a cross-link (tryptophyl-tyrosyl-methioninium (Tyr-Met) (with W-107)). Histidine 269 is a heme b binding site.

This sequence belongs to the peroxidase family. Peroxidase/catalase subfamily. In terms of assembly, homodimer or homotetramer. Requires heme b as cofactor. In terms of processing, formation of the three residue Trp-Tyr-Met cross-link is important for the catalase, but not the peroxidase activity of the enzyme.

The catalysed reaction is H2O2 + AH2 = A + 2 H2O. It catalyses the reaction 2 H2O2 = O2 + 2 H2O. Its function is as follows. Bifunctional enzyme with both catalase and broad-spectrum peroxidase activity. This chain is Catalase-peroxidase 2, found in Burkholderia ambifaria (strain MC40-6).